The following is a 261-amino-acid chain: 5'-nucleotidase SurE (261 aa).

Residues Asp-8, Asp-9, Ser-43, and Asn-96 each contribute to the a divalent metal cation site.

It belongs to the SurE nucleotidase family. A divalent metal cation is required as a cofactor.

It is found in the cytoplasm. The catalysed reaction is a ribonucleoside 5'-phosphate + H2O = a ribonucleoside + phosphate. In terms of biological role, nucleotidase that shows phosphatase activity on nucleoside 5'-monophosphates. The chain is 5'-nucleotidase SurE from Roseobacter denitrificans (strain ATCC 33942 / OCh 114) (Erythrobacter sp. (strain OCh 114)).